The sequence spans 140 residues: Sex-regulated protein janus-B (140 aa).

Arginine 42 is a binding site for substrate. The active-site Proton acceptor is histidine 69. A substrate-binding site is contributed by 110-112 (SRT).

Belongs to the janus family.

Its function is as follows. JanA and janB regulate somatic sex differentiation. The sequence is that of Sex-regulated protein janus-B (janB) from Drosophila erecta (Fruit fly).